We begin with the raw amino-acid sequence, 23 residues long: Paralytic peptide 2 (23 aa).

The cysteines at positions 7 and 19 are disulfide-linked.

It belongs to the GBP/PSP1/paralytic peptide family. As to expression, hemolymph.

Functionally, causes rapid, rigid paralysis when injected into Lepidopteran larvae. The physiological role may be to reduce hemolymph loss following injury and promote wound healing. The chain is Paralytic peptide 2 from Manduca sexta (Tobacco hawkmoth).